Consider the following 910-residue polypeptide: Protein translocase subunit SecA 1 (910 aa).

ATP contacts are provided by residues Gln-86, 104–108 (GEGKT), and Asp-512. 4 residues coordinate Zn(2+): Cys-894, Cys-896, Cys-905, and His-906.

Belongs to the SecA family. Monomer and homodimer. Part of the essential Sec protein translocation apparatus which comprises SecA, SecYEG and auxiliary proteins SecDF-YajC and YidC. It depends on Zn(2+) as a cofactor.

It is found in the cell inner membrane. It localises to the cytoplasm. It catalyses the reaction ATP + H2O + cellular proteinSide 1 = ADP + phosphate + cellular proteinSide 2.. In terms of biological role, part of the Sec protein translocase complex. Interacts with the SecYEG preprotein conducting channel. Has a central role in coupling the hydrolysis of ATP to the transfer of proteins into and across the cell membrane, serving both as a receptor for the preprotein-SecB complex and as an ATP-driven molecular motor driving the stepwise translocation of polypeptide chains across the membrane. This is Protein translocase subunit SecA 1 from Bordetella avium (strain 197N).